We begin with the raw amino-acid sequence, 160 residues long: uncharacterized protein (160 aa).

An N-acetyltransferase domain is found at 5–160 (ISLSFYKPEH…GEQLILHHFL (156 aa)).

This is an uncharacterized protein from Bacillus subtilis (strain 168).